Reading from the N-terminus, the 260-residue chain is tRNA pseudouridine synthase A (260 aa).

Catalysis depends on Asp51, which acts as the Nucleophile. Tyr109 lines the substrate pocket.

Belongs to the tRNA pseudouridine synthase TruA family. Homodimer.

The catalysed reaction is uridine(38/39/40) in tRNA = pseudouridine(38/39/40) in tRNA. In terms of biological role, formation of pseudouridine at positions 38, 39 and 40 in the anticodon stem and loop of transfer RNAs. This Methylibium petroleiphilum (strain ATCC BAA-1232 / LMG 22953 / PM1) protein is tRNA pseudouridine synthase A.